The following is a 960-amino-acid chain: Semaphorin-6C (960 aa).

A signal peptide spans 1–23 (MPRAPHSMPLLLLLLLSLPQAQT). Residues 24-635 (AFPQDPIPLL…ASASRSIPIP (612 aa)) lie on the Extracellular side of the membrane. The region spanning 29–515 (PIPLLTSDLQ…FPGCIVYLSL (487 aa)) is the Sema domain. N-linked (GlcNAc...) asparagine glycosylation occurs at Asn-69. Cystine bridges form between Cys-110-Cys-120, Cys-138-Cys-147, Cys-261-Cys-372, and Cys-286-Cys-331. Residue Asn-285 is glycosylated (N-linked (GlcNAc...) asparagine). Asn-436 carries an N-linked (GlcNAc...) asparagine glycan. Disulfide bonds link Cys-478-Cys-509, Cys-518-Cys-536, Cys-524-Cys-569, and Cys-528-Cys-544. The segment at 555–624 (VDLTGNQESM…HTQGVRRDLS (70 aa)) is disordered. A helical transmembrane segment spans residues 636 to 656 (LLLACVAAAFALGASVSGLLV). At 657–960 (SCACRRANRR…PAPHGSHFNF (304 aa)) the chain is on the cytoplasmic side. 3 disordered regions span residues 685-725 (LARL…SPPE), 745-792 (ASGG…PGQE), and 806-960 (HGPQ…HFNF). The span at 899-909 (RVPSGGPSRYS) shows a compositional bias: low complexity. The segment covering 922-935 (PDGHRGRSLKRVDV) has biased composition (basic and acidic residues). The segment covering 940 to 952 (SPKPPLATPPQPA) has biased composition (pro residues).

This sequence belongs to the semaphorin family. As to expression, expressed in many regions of the developing nervous system, probably in neurons and their precursors, but also in nonneural tissue such as immature muscle and dermis. In adult, strong expression in the skeletal muscle and moderate expression in the brain, where cerebellum shows the highest expression. Also expressed in almost all areas of the CNS.

The protein localises to the cell membrane. Shows growth cone collapsing activity on dorsal root ganglion (DRG) neurons in vitro. May be a stop signal for the DRG neurons in their target areas, and possibly also for other neurons. May also be involved in the maintenance and remodeling of neuronal connections. The polypeptide is Semaphorin-6C (Sema6c) (Rattus norvegicus (Rat)).